The sequence spans 895 residues: Plasma membrane ATPase 1 (895 aa).

The interval 1 to 53 (MSATEPTNEKVDKIVSDDEDEDIDQLVADLQSNPGAGDEEEEEENDSSFKAVP) is disordered. The Cytoplasmic portion of the chain corresponds to 1–92 (MSATEPTNEK…AEEQENLVLK (92 aa)). Positions 7–16 (TNEKVDKIVS) are enriched in basic and acidic residues. The segment covering 37–46 (GDEEEEEEND) has biased composition (acidic residues). A helical transmembrane segment spans residues 93–113 (FVMFFVGPIQFVMEAAAVLAA). At 114–117 (GLED) the chain is on the extracellular side. The helical transmembrane segment at 118 to 137 (WVDFGVICALLLLNAFVGFI) threads the bilayer. Over 138–268 (QEYQAGSIVD…GTGHFTEVLN (131 aa)) the chain is Cytoplasmic. The chain crosses the membrane as a helical span at residues 269–290 (GIGTTLLVFVIVTLLVVWVACF). Residues 291-301 (YRTVRIVPILR) lie on the Extracellular side of the membrane. The chain crosses the membrane as a helical span at residues 302-324 (YTLAITIIGVPVGLPAVVTTTMA). At 325–696 (VGAAYLAKKQ…IAILNRSLDI (372 aa)) the chain is on the cytoplasmic side. D355 (4-aspartylphosphate intermediate) is an active-site residue. Mg(2+) is bound by residues D611 and D615. A helical transmembrane segment spans residues 697-715 (NLIVFIAIFADVATLAIAY). Over 716 to 731 (DNAPYDPKPVKWNLPR) the chain is Extracellular. The chain crosses the membrane as a helical span at residues 732–751 (LWGMSIVLGIILAIGTWITL). At 752–801 (TTMLLPKGGIIQNFGGLDGILFLQISLTENWLIFVTRAQGPFWSSIPSWQ) the chain is on the cytoplasmic side. Residues 802 to 822 (LSGAVLIVDIIATCFTLFGWW) traverse the membrane as a helical segment. The Extracellular segment spans residues 823–834 (SQNWTDIVTVVR). The helical transmembrane segment at 835–851 (TWIWSFGVFCVMGGAYY) threads the bilayer. The Cytoplasmic segment spans residues 852-895 (LMSTSEAFDNFCNGRKPQQHTDKRSLEDFLVSMQRVSTQHEKST).

It belongs to the cation transport ATPase (P-type) (TC 3.A.3) family. Type IIIA subfamily.

Its subcellular location is the cell membrane. It carries out the reaction ATP + H2O + H(+)(in) = ADP + phosphate + 2 H(+)(out). In terms of biological role, the plasma membrane ATPase of plants and fungi is a hydrogen ion pump. The proton gradient it generates drives the active transport of nutrients by H(+)-symport. The resulting external acidification and/or internal alkinization may mediate growth responses. This chain is Plasma membrane ATPase 1 (PMA1), found in Candida albicans (Yeast).